Reading from the N-terminus, the 316-residue chain is Acetaldehyde dehydrogenase (316 aa).

Residue 11 to 14 (SGNI) coordinates NAD(+). Residue Cys-131 is the Acyl-thioester intermediate of the active site. NAD(+) is bound by residues 162-170 (SAGPGTRAN) and Asn-289.

The protein belongs to the acetaldehyde dehydrogenase family. Interacts with MhpE.

The enzyme catalyses acetaldehyde + NAD(+) + CoA = acetyl-CoA + NADH + H(+). The protein operates within aromatic compound metabolism; 3-phenylpropanoate degradation. Its function is as follows. Catalyzes the conversion of acetaldehyde to acetyl-CoA, using NAD(+) and coenzyme A. Is the final enzyme in the meta-cleavage pathway for the degradation of aromatic compounds. The protein is Acetaldehyde dehydrogenase of Escherichia coli O81 (strain ED1a).